The following is a 614-amino-acid chain: Protein YehQ (614 aa).

SWIM-type zinc fingers lie at residues 55–89 and 151–185; these read VRTQ…LSYQ and SDVR…QAFV.

This is Protein YehQ (yehQ) from Escherichia coli (strain K12).